The following is a 410-amino-acid chain: SPbeta prophage-derived uncharacterized protein YonV (410 aa).

This is SPbeta prophage-derived uncharacterized protein YonV (yonV) from Bacillus subtilis (strain 168).